Reading from the N-terminus, the 418-residue chain is Tyrosine--tRNA ligase 1 (418 aa).

Tyrosine 34 serves as a coordination point for L-tyrosine. The short motif at 39–48 (PTADSLHIGH) is the 'HIGH' region element. Positions 169 and 173 each coordinate L-tyrosine. The short motif at 230–234 (KFGKT) is the 'KMSKS' region element. Lysine 233 serves as a coordination point for ATP. Residues 352-418 (TVLIDLLVES…GKKKYFLIRY (67 aa)) enclose the S4 RNA-binding domain.

This sequence belongs to the class-I aminoacyl-tRNA synthetase family. TyrS type 1 subfamily. As to quaternary structure, homodimer.

The protein localises to the cytoplasm. The enzyme catalyses tRNA(Tyr) + L-tyrosine + ATP = L-tyrosyl-tRNA(Tyr) + AMP + diphosphate + H(+). Catalyzes the attachment of tyrosine to tRNA(Tyr) in a two-step reaction: tyrosine is first activated by ATP to form Tyr-AMP and then transferred to the acceptor end of tRNA(Tyr). This is Tyrosine--tRNA ligase 1 from Bacillus cereus (strain ATCC 10987 / NRS 248).